The chain runs to 101 residues: Putative monooxygenase Rv0793 (101 aa).

The ABM domain occupies 5-93; it reads VAVIARFMPR…LTRPVAVTVL (89 aa).

As to quaternary structure, homodimer.

Its function is as follows. Putative monooygenase that might be involved in antibiotic biosynthesis, or may act as reactive oxygen species scavenger that could help in evading host defenses. In Mycobacterium tuberculosis (strain ATCC 25618 / H37Rv), this protein is Putative monooxygenase Rv0793.